Consider the following 665-residue polypeptide: PR5-like receptor kinase (665 aa).

The first 24 residues, 1–24 (MVEGFSLSLMFLLVSHFFVSGVMS), serve as a signal peptide directing secretion. Topologically, residues 25 to 276 (RNFTIENKCD…TKQKSSWKLK (252 aa)) are extracellular. 2 N-linked (GlcNAc...) asparagine glycosylation sites follow: Asn-26 and Asn-88. Cystine bridges form between Cys-33-Cys-249, Cys-81-Cys-91, Cys-96-Cys-103, Cys-153-Cys-238, Cys-158-Cys-221, Cys-166-Cys-184, Cys-188-Cys-197, and Cys-198-Cys-208. Asn-163 is a glycosylation site (N-linked (GlcNAc...) asparagine). An N-linked (GlcNAc...) asparagine glycan is attached at Asn-233. Residues 277–297 (LIVGVSAALTLMILIVVVIIV) form a helical membrane-spanning segment. Residues 298–665 (RTKNMRNSEW…DVLQHGSRSS (368 aa)) are Cytoplasmic-facing. One can recognise a Protein kinase domain in the interval 331–620 (NSFAHVLGKG…ALQVPPNPLL (290 aa)). Residues 337–345 (LGKGGFGTV) and Lys-360 contribute to the ATP site. The active-site Proton acceptor is Asp-455.

In the N-terminal section; belongs to the thaumatin family. It in the C-terminal section; belongs to the protein kinase superfamily. Ser/Thr protein kinase family. In terms of processing, autophosphorylated in vitro. In terms of tissue distribution, expressed in roots. Expressed at low levels in stems.

Its subcellular location is the membrane. The enzyme catalyses L-seryl-[protein] + ATP = O-phospho-L-seryl-[protein] + ADP + H(+). The catalysed reaction is L-threonyl-[protein] + ATP = O-phospho-L-threonyl-[protein] + ADP + H(+). Possesses kinase activity in vitro. The chain is PR5-like receptor kinase from Arabidopsis thaliana (Mouse-ear cress).